Consider the following 154-residue polypeptide: 6,7-dimethyl-8-ribityllumazine synthase (154 aa).

Residues Phe-22, 57–59, and 81–83 contribute to the 5-amino-6-(D-ribitylamino)uracil site; these read AYE and AVI. 86 to 87 contacts (2S)-2-hydroxy-3-oxobutyl phosphate; it reads GT. His-89 serves as the catalytic Proton donor. Phe-114 lines the 5-amino-6-(D-ribitylamino)uracil pocket. Residue Arg-128 participates in (2S)-2-hydroxy-3-oxobutyl phosphate binding.

This sequence belongs to the DMRL synthase family. As to quaternary structure, forms an icosahedral capsid composed of 60 subunits, arranged as a dodecamer of pentamers.

It catalyses the reaction (2S)-2-hydroxy-3-oxobutyl phosphate + 5-amino-6-(D-ribitylamino)uracil = 6,7-dimethyl-8-(1-D-ribityl)lumazine + phosphate + 2 H2O + H(+). The protein operates within cofactor biosynthesis; riboflavin biosynthesis; riboflavin from 2-hydroxy-3-oxobutyl phosphate and 5-amino-6-(D-ribitylamino)uracil: step 1/2. Its function is as follows. Catalyzes the formation of 6,7-dimethyl-8-ribityllumazine by condensation of 5-amino-6-(D-ribitylamino)uracil with 3,4-dihydroxy-2-butanone 4-phosphate. This is the penultimate step in the biosynthesis of riboflavin. This Colwellia psychrerythraea (strain 34H / ATCC BAA-681) (Vibrio psychroerythus) protein is 6,7-dimethyl-8-ribityllumazine synthase.